A 123-amino-acid chain; its full sequence is Small ribosomal subunit protein uS12 (123 aa).

Residues 9–32 (ANPREVQKSRKKVPALQQSPQKRG) are disordered. Asp-89 bears the 3-methylthioaspartic acid mark.

Belongs to the universal ribosomal protein uS12 family. As to quaternary structure, part of the 30S ribosomal subunit. Contacts proteins S8 and S17. May interact with IF1 in the 30S initiation complex.

With S4 and S5 plays an important role in translational accuracy. Its function is as follows. Interacts with and stabilizes bases of the 16S rRNA that are involved in tRNA selection in the A site and with the mRNA backbone. Located at the interface of the 30S and 50S subunits, it traverses the body of the 30S subunit contacting proteins on the other side and probably holding the rRNA structure together. The combined cluster of proteins S8, S12 and S17 appears to hold together the shoulder and platform of the 30S subunit. The protein is Small ribosomal subunit protein uS12 of Bradyrhizobium sp. (strain BTAi1 / ATCC BAA-1182).